The primary structure comprises 140 residues: Nucleoside diphosphate kinase (140 aa).

The ATP site is built by Lys11, Phe59, Arg87, Thr93, Arg104, and Asn114. His117 serves as the catalytic Pros-phosphohistidine intermediate.

Belongs to the NDK family. As to quaternary structure, homotetramer. It depends on Mg(2+) as a cofactor.

The protein resides in the cytoplasm. It carries out the reaction a 2'-deoxyribonucleoside 5'-diphosphate + ATP = a 2'-deoxyribonucleoside 5'-triphosphate + ADP. It catalyses the reaction a ribonucleoside 5'-diphosphate + ATP = a ribonucleoside 5'-triphosphate + ADP. Functionally, major role in the synthesis of nucleoside triphosphates other than ATP. The ATP gamma phosphate is transferred to the NDP beta phosphate via a ping-pong mechanism, using a phosphorylated active-site intermediate. In Francisella philomiragia subsp. philomiragia (strain ATCC 25017 / CCUG 19701 / FSC 153 / O#319-036), this protein is Nucleoside diphosphate kinase.